The following is a 363-amino-acid chain: D-alanine--D-alanine ligase (363 aa).

The ATP-grasp domain occupies 148-353 (KKLLAAEGLP…YGTLVSTLIE (206 aa)). 176 to 231 (RERLGLPVFVKPARAGSSIGITKVDDWAALDTAIAAAREHDPKVIVEAGIVGREVE) contributes to the ATP binding site. Mg(2+) is bound by residues Asp-308, Glu-320, and Asn-322.

This sequence belongs to the D-alanine--D-alanine ligase family. Mg(2+) serves as cofactor. Mn(2+) is required as a cofactor.

Its subcellular location is the cytoplasm. The enzyme catalyses 2 D-alanine + ATP = D-alanyl-D-alanine + ADP + phosphate + H(+). Its pathway is cell wall biogenesis; peptidoglycan biosynthesis. Functionally, cell wall formation. The chain is D-alanine--D-alanine ligase from Nocardia farcinica (strain IFM 10152).